The chain runs to 413 residues: Arginine biosynthesis bifunctional protein ArgJ (413 aa).

Positions 158, 184, 195, 285, 408, and 413 each coordinate substrate. The Nucleophile role is filled by Thr195.

The protein belongs to the ArgJ family. In terms of assembly, heterotetramer of two alpha and two beta chains.

Its subcellular location is the cytoplasm. The enzyme catalyses N(2)-acetyl-L-ornithine + L-glutamate = N-acetyl-L-glutamate + L-ornithine. It carries out the reaction L-glutamate + acetyl-CoA = N-acetyl-L-glutamate + CoA + H(+). It functions in the pathway amino-acid biosynthesis; L-arginine biosynthesis; L-ornithine and N-acetyl-L-glutamate from L-glutamate and N(2)-acetyl-L-ornithine (cyclic): step 1/1. The protein operates within amino-acid biosynthesis; L-arginine biosynthesis; N(2)-acetyl-L-ornithine from L-glutamate: step 1/4. Catalyzes two activities which are involved in the cyclic version of arginine biosynthesis: the synthesis of N-acetylglutamate from glutamate and acetyl-CoA as the acetyl donor, and of ornithine by transacetylation between N(2)-acetylornithine and glutamate. This Brucella suis biovar 1 (strain 1330) protein is Arginine biosynthesis bifunctional protein ArgJ.